Reading from the N-terminus, the 459-residue chain is Argininosuccinate lyase (459 aa).

This sequence belongs to the lyase 1 family. Argininosuccinate lyase subfamily.

The protein localises to the cytoplasm. It carries out the reaction 2-(N(omega)-L-arginino)succinate = fumarate + L-arginine. The protein operates within amino-acid biosynthesis; L-arginine biosynthesis; L-arginine from L-ornithine and carbamoyl phosphate: step 3/3. In Prochlorococcus marinus (strain MIT 9215), this protein is Argininosuccinate lyase.